A 725-amino-acid chain; its full sequence is N-alpha-acetyltransferase 35, NatC auxiliary subunit (725 aa).

Ser-187 carries the post-translational modification Phosphoserine. The disordered stretch occupies residues 548–573 (ERIMEEQQKGRSSKKTKKKKKVRPLS). The segment covering 558 to 571 (RSSKKTKKKKKVRP) has biased composition (basic residues).

The protein belongs to the MAK10 family. As to quaternary structure, component of the N-terminal acetyltransferase C (NatC) complex, which is composed of NAA35, NAA38 and NAA30.

Its subcellular location is the cytoplasm. In terms of biological role, auxillary component of the N-terminal acetyltransferase C (NatC) complex which catalyzes acetylation of N-terminal methionine residues. N-terminal acetylation protects proteins from ubiquitination and degradation by the N-end rule pathway. Involved in regulation of apoptosis and proliferation of smooth muscle cells. The polypeptide is N-alpha-acetyltransferase 35, NatC auxiliary subunit (NAA35) (Homo sapiens (Human)).